The sequence spans 215 residues: Cytochrome b6 (215 aa).

A helical membrane pass occupies residues 32 to 52; the sequence is IFHCLGGITLTCFLVQVATGF. Cys35 is a heme c binding site. Heme b contacts are provided by His86 and His100. Transmembrane regions (helical) follow at residues 90 to 110, 116 to 136, and 186 to 206; these read ASMMVLMMILHVFRVYLTGGF, LTWVTGVVLAVLTASFGVTGY, and LHTFVLPLLTAVFMLMHFPMI. The heme b site is built by His187 and His202.

This sequence belongs to the cytochrome b family. PetB subfamily. As to quaternary structure, the 4 large subunits of the cytochrome b6-f complex are cytochrome b6, subunit IV (17 kDa polypeptide, PetD), cytochrome f and the Rieske protein, while the 4 small subunits are PetG, PetL, PetM and PetN. The complex functions as a dimer. Requires heme b as cofactor. Heme c is required as a cofactor.

Its subcellular location is the plastid. It is found in the chloroplast thylakoid membrane. Component of the cytochrome b6-f complex, which mediates electron transfer between photosystem II (PSII) and photosystem I (PSI), cyclic electron flow around PSI, and state transitions. The protein is Cytochrome b6 of Amborella trichopoda.